Reading from the N-terminus, the 1713-residue chain is MNENEFSTNSLINQQGTNNNNNNNTNNNITNINFGTENNNNSPIINNNNNNNNNNNNNINIVESPPLVIRQQQLFNNFQQLNTPPTTPNTSTPSTPTSSRNNNNNNNNNIDFYNSKFLPPKPKSLNNSGNYLNNNNNINNNNNNNNNNHHNNNNNNNNNINFTNLSNSGNSLKFNKNMSDITNDNSNSSSNAGSNSKLSNSNGCSNLLTSSFNNILNSTNVQVVSGNNNYHNGNNENGNNTFHVGNNLNNNNNNNNIGSSGGNNSHHHHNHSHHNSGNHQNGGSNGQPLSYSYDNLFNNLYADIQHPHQYLSNHSGNNINNTSQSNNNNNNNNNNNNNNNNNNNNNNNNSNNNNNNNSNNNNNNNNNNNNNNNNNNNNNSNNSNSNNTNNSNSNHNNNNNHNNNNNNNNNNSNNNNIHGNSNNNNNNNHGSSYVTPSSDISSPSPPSSTSMASIVSSPPVQVSPLQSPASHLSPMSPSNNFGGNHNNYNHAHHSHHNNHAHHNTHNYNNNNNNNNNNNNNNNNNNNNSNNSNNNSNTNNNGNNGNNSNNNNNHPMSHIDAFNKVTQLTSTTSTSIPKKLKRDYEQTFSKDEWEDYTPPSKYFQLFSYSKSEMSGSFSFKVKRTDKNIQYSELDSAWILYRQNRFQVDCDLIGSLESWSNLDRNNTIFVNSNNNNNNNNNNNNNNDNGDLSEVNGLFFTLYVLKFTDANNIQSSNDQNDRVPIHQLGGATGKKDRLTVEPSPVVKGRGCWNKLQFGSATSNNARVHPDQPNPNQQFFRVVITLNAVIDKNFENQNFTTPQFYPIQSKISPPMIVRGQNPGRFLNHDKSLKKDPNSSPNGGKGGGGSGSGGMGGGMGGGMGNNGSSGSSSNGGYGNGSANKHMKTFLNTSNSDNSDDDQSPTTTTTTTTTTTTPTPTPTTTTTTTNETTTSTIPTTTPLPKTPSPTLTAPSITTTLDGNNTSIFNGPCDLTTIDPLTFSNLLQDPLILGQTMMVDIDSNNILNNINTNSTINNNNNNNNTNSDDLMVYDPQTTLDLANLIQQQQLHQQQQLSNLKAAQAAAAIAASIANTTSTPNTTSTDIQNPFNFLNNPLTNTNIQQSLFLNQNIPGVSTNQMINSLNLANGLLQNTTTPQSHHTILEINNNHHHHQQQQQQPITTTTTTTTTIPSTPQPSQQSMTNSGGSSSTNSSISRKNKFAKWNTNPFMEEVIYTNNKVGINTTTPTQALAVNGNILVTGELFKPSDQRIKSNIRLDNTDHWDKINRLKIYDYDRKKMMGYDDPNNNGTTQESTTVKEKGFLAQEVKEVLPNAVKVAGEVKLQDGTTVPNLLVVNDRVLLLENIGATQQIGRSLKKEKDHIVKIDRDLDRVKIEGSREKHVILTRMQDMVNFMHSEESERSNNNNEESCVYCSLMGFGPAWTMFVFGFFIPICWIIGSFYLFSPTRVKWVSGLMNFVATIIFILALSLMTFYVPELAALIIAPALIVMGFVVCILVGFFRQRNREKKRYLRERIKLMQADGYKNLADHVSSFRVDYNQHQAKANNNMLKKKKKRIQMEKLNSQRNYGGINTTDKINNSNINNIGINNPNNIQNNQINNILNNSNNNINNNNQERLSDSSKSSFIDDFKKSSSNNHKDFHEIPLQEIIQSIGIKGKKQSSSSAKTRSLSSSNLVNSVNSNLVNSTNSNNTSILLKSHNSNSPLFNSTPTPTNVVFNSIEV.

The span at 1–12 shows a compositional bias: polar residues; that stretch reads MNENEFSTNSLI. 7 disordered regions span residues 1 to 35, 79 to 200, 226 to 290, 309 to 557, 713 to 734, 808 to 952, and 1143 to 1190; these read MNEN…INFG, QQLN…KLSN, GNNN…QPLS, QYLS…PMSH, SNDQ…KKDR, SPPM…SITT, and HHHH…SISR. 5 stretches are compositionally biased toward low complexity: residues 13–35, 79–109, 126–170, 177–200, and 226–264; these read NQQG…INFG, QQLN…NNNN, NNSG…NSGN, NMSD…KLSN, and GNNN…GGNN. Over residues 265–276 the composition is skewed to basic residues; sequence SHHHHNHSHHNS. Composition is skewed to low complexity over residues 317 to 470 and 478 to 489; these read NNIN…SPAS and SNNFGGNHNNYN. Residues 490–504 are compositionally biased toward basic residues; that stretch reads HAHHSHHNNHAHHNT. The span at 505–553 shows a compositional bias: low complexity; sequence HNYNNNNNNNNNNNNNNNNNNNNSNNSNNNSNTNNNGNNGNNSNNNNNH. The segment at residues 544–825 is a DNA-binding region (NDT80); sequence GNNSNNNNNH…QNPGRFLNHD (282 aa). A compositionally biased stretch (basic and acidic residues) spans 822 to 832; it reads LNHDKSLKKDP. Gly residues predominate over residues 838–874; it reads GGKGGGGSGSGGMGGGMGGGMGNNGSSGSSSNGGYGN. 2 stretches are compositionally biased toward low complexity: residues 898–946 and 1148–1189; these read SPTT…PTLT and QQQQ…SSIS. Positions 1240–1355 constitute a Peptidase S74 domain; the sequence is SDQRIKSNIR…RSLKKEKDHI (116 aa). Transmembrane regions (helical) follow at residues 1416–1436, 1447–1467, and 1473–1493; these read TMFV…FYLF, LMNF…TFYV, and LIIA…VGFF. Positions 1596–1605 are enriched in low complexity; that stretch reads NSNNNINNNN. Disordered regions lie at residues 1596–1634 and 1646–1665; these read NSNN…DFHE and IKGK…SSSN. The segment covering 1617 to 1634 has biased composition (basic and acidic residues); the sequence is FIDDFKKSSSNNHKDFHE.

The protein resides in the membrane. This is an uncharacterized protein from Dictyostelium discoideum (Social amoeba).